A 133-amino-acid chain; its full sequence is Nickel-responsive regulator (133 aa).

Positions 76, 87, 89, and 95 each coordinate Ni(2+).

This sequence belongs to the transcriptional regulatory CopG/NikR family. As to quaternary structure, homotetramer. Ni(2+) is required as a cofactor.

Transcriptional repressor of the nikABCDE operon. Is active in the presence of excessive concentrations of intracellular nickel. In Enterobacter sp. (strain 638), this protein is Nickel-responsive regulator.